We begin with the raw amino-acid sequence, 402 residues long: Phosphoglycerate kinase (402 aa).

Residues aspartate 24–asparagine 26, arginine 40, histidine 63–arginine 66, arginine 122, and arginine 155 each bind substrate. Residues lysine 206, glycine 297, glutamate 328, and glycine 358–serine 361 each bind ATP.

It belongs to the phosphoglycerate kinase family. As to quaternary structure, monomer.

Its subcellular location is the cytoplasm. The catalysed reaction is (2R)-3-phosphoglycerate + ATP = (2R)-3-phospho-glyceroyl phosphate + ADP. It participates in carbohydrate degradation; glycolysis; pyruvate from D-glyceraldehyde 3-phosphate: step 2/5. This Prochlorococcus marinus (strain MIT 9312) protein is Phosphoglycerate kinase.